A 188-amino-acid chain; its full sequence is Probable nicotinate-nucleotide adenylyltransferase (188 aa).

This sequence belongs to the NadD family.

It carries out the reaction nicotinate beta-D-ribonucleotide + ATP + H(+) = deamido-NAD(+) + diphosphate. Its pathway is cofactor biosynthesis; NAD(+) biosynthesis; deamido-NAD(+) from nicotinate D-ribonucleotide: step 1/1. Functionally, catalyzes the reversible adenylation of nicotinate mononucleotide (NaMN) to nicotinic acid adenine dinucleotide (NaAD). The protein is Probable nicotinate-nucleotide adenylyltransferase of Acholeplasma laidlawii (strain PG-8A).